An 803-amino-acid chain; its full sequence is MNMFKEAVTFKDVAVAFTEEELGLLGPAQRKLYRDVMVENFRNLLSVGHPPFKQDVSPIERNEQLWIMTTATRRQGNLGEKNQSKLITVQDRESEEELSCWQIWQQIANDLTRCQDSMINNSQCHKQGDFPYQVGTELSIQISEDENYIVNKADGPNNTGNPEFPILRTQDSWRKTFLTESQRLNRDQQISIKNKLCQCKKGVDPIGWISHHDGHRVHKSEKSYRPNDYEKDNMKILTFDHNSMIHTGQKSYQCNECKKPFSDLSSFDLHQQLQSGEKSLTCVERGKGFCYSPVLPVHQKVHVGEKLKCDECGKEFSQGAHLQTHQKVHVIEKPYKCKQCGKGFSRRSALNVHCKVHTAEKPYNCEECGRAFSQASHLQDHQRLHTGEKPFKCDACGKSFSRNSHLQSHQRVHTGEKPYKCEECGKGFICSSNLYIHQRVHTGEKPYKCEECGKGFSRPSSLQAHQGVHTGEKSYICTVCGKGFTLSSNLQAHQRVHTGEKPYKCNECGKSFRRNSHYQVHLVVHTGEKPYKCEICGKGFSQSSYLQIHQKAHSIEKPFKCEECGQGFNQSSRLQIHQLIHTGEKPYKCEECGKGFSRRADLKIHCRIHTGEKPYNCEECGKVFRQASNLLAHQRVHSGEKPFKCEECGKSFGRSAHLQAHQKVHTGDKPYKCDECGKGFKWSLNLDMHQRVHTGEKPYKCGECGKYFSQASSLQLHQSVHTGEKPYKCDVCGKVFSRSSQLQSHQRVHTGEKPYKCEICGKSFSWRSNLTVHHRIHVGDKSYKSNRGGKNIRESTQEKKSIK.

Positions 8 to 78 (VTFKDVAVAF…TTATRRQGNL (71 aa)) constitute a KRAB domain. The C2H2-type 1; degenerate zinc-finger motif lies at 252-274 (YQCNECKKPFSDLSSFDLHQQLQ). The segment at 280–302 (LTCVERGKGFCYSPVLPVHQKVH) adopts a C2H2-type 2; degenerate zinc-finger fold. C2H2-type zinc fingers lie at residues 307 to 329 (LKCDECGKEFSQGAHLQTHQKVH), 335 to 357 (YKCKQCGKGFSRRSALNVHCKVH), 363 to 385 (YNCEECGRAFSQASHLQDHQRLH), 391 to 413 (FKCDACGKSFSRNSHLQSHQRVH), 419 to 441 (YKCEECGKGFICSSNLYIHQRVH), 447 to 469 (YKCEECGKGFSRPSSLQAHQGVH), 475 to 497 (YICTVCGKGFTLSSNLQAHQRVH), 503 to 525 (YKCNECGKSFRRNSHYQVHLVVH), 531 to 553 (YKCEICGKGFSQSSYLQIHQKAH), 559 to 581 (FKCEECGQGFNQSSRLQIHQLIH), 587 to 609 (YKCEECGKGFSRRADLKIHCRIH), 615 to 637 (YNCEECGKVFRQASNLLAHQRVH), 643 to 665 (FKCEECGKSFGRSAHLQAHQKVH), 671 to 693 (YKCDECGKGFKWSLNLDMHQRVH), 699 to 721 (YKCGECGKYFSQASSLQLHQSVH), 727 to 749 (YKCDVCGKVFSRSSQLQSHQRVH), and 755 to 777 (YKCEICGKSFSWRSNLTVHHRIH). Residues 781–803 (KSYKSNRGGKNIRESTQEKKSIK) form a disordered region. A compositionally biased stretch (basic and acidic residues) spans 791-803 (NIRESTQEKKSIK).

It belongs to the krueppel C2H2-type zinc-finger protein family.

Its subcellular location is the nucleus. Its function is as follows. May be involved in transcriptional regulation. In Homo sapiens (Human), this protein is Zinc finger protein 226 (ZNF226).